A 310-amino-acid chain; its full sequence is Junctional adhesion molecule C (310 aa).

Residues 1–31 (MALSRRLRLRLCARLPDFFLLLLFRGCVIEA) form the signal peptide. Over 32 to 241 (VNLKSSNRNP…GQDMEVYDLN (210 aa)) the chain is Extracellular. The region spanning 35-127 (KSSNRNPVVH…VALNDRKEVD (93 aa)) is the Ig-like V-type domain. Intrachain disulfides connect C53/C115 and C160/C219. N-linked (GlcNAc...) asparagine glycosylation is found at N104 and N192. In terms of domain architecture, Ig-like C2-type spans 139–236 (PVAPVCRVPK…AARCEGQDME (98 aa)). Residues 242 to 262 (IAGIIGGVLVVLIVLAVITMG) traverse the membrane as a helical segment. The Cytoplasmic portion of the chain corresponds to 263–310 (ICCAYRRGCFISSKQDGESYKSPGKHEGVNYIRTSEEGDFRHKSSFVI). 2 S-palmitoyl cysteine lipidation sites follow: C264 and C265.

It belongs to the immunoglobulin superfamily. As to quaternary structure, interacts with ITGAM. Interacts with GORASP2. Proteolytically cleaved from endothelial cells surface into a soluble form by ADAM10 and ADAM17; the release of soluble JAM3 is increased by pro-inflammatory factors. Post-translationally, S-palmitoylated by ZDHHC7. S-palmitoylation promotes expression at tight junctions.

The protein localises to the cell membrane. The protein resides in the cell junction. It localises to the desmosome. It is found in the tight junction. Its subcellular location is the secreted. Functionally, junctional adhesion protein that mediates heterotypic cell-cell interactions with its cognate receptor JAM2 to regulate different cellular processes. Plays a role in homing and mobilization of hematopoietic stem and progenitor cells within the bone marrow. At the surface of bone marrow stromal cells, it contributes to the retention of the hematopoietic stem and progenitor cells expressing JAM3. Plays a central role in leukocytes extravasation by facilitating transmigration through the endothelium. Plays a role in spermatogenesis where JAM2 and JAM3, which are respectively expressed by Sertoli and germ cells, mediate an interaction between both cell types and play an essential role in the anchorage of germ cells onto Sertoli cells and the assembly of cell polarity complexes during spermatid differentiation. Also functions as a counter-receptor for ITGAM, mediating leukocyte-platelet interactions and is involved in the regulation of transepithelial migration of polymorphonuclear neutrophils (PMN). Plays a role in angiogenesis. Plays a role in the regulation of cell migration. During myogenesis, it is involved in myocyte fusion. Its function is as follows. Promotes chemotaxis of vascular endothelial cells and stimulates angiogenesis. This is Junctional adhesion molecule C (Jam3) from Rattus norvegicus (Rat).